Consider the following 353-residue polypeptide: Phenol hydroxylase P5 protein (353 aa).

Positions 3–93 (YQVTIEPIGT…DMVIEADVDE (91 aa)) constitute a 2Fe-2S ferredoxin-type domain. Positions 37, 42, 45, and 77 each coordinate [2Fe-2S] cluster. Residues 102–201 (VQDYQATVIE…SGPYGQFFVR (100 aa)) form the FAD-binding FR-type domain.

The multicomponent enzyme phenol hydroxylase is formed by P0, P1, P2, P3, P4 and P5 polypeptides. FAD is required as a cofactor. It depends on [2Fe-2S] cluster as a cofactor.

It carries out the reaction phenol + NADPH + O2 + H(+) = catechol + NADP(+) + H2O. Its pathway is aromatic compound metabolism; phenol degradation. Catabolizes phenol, and some of its methylated derivatives. P5 is required for growth on phenol, and for in vitro phenol hydroxylase activity. Its function is as follows. Probable electron transfer from NADPH, via FAD and the 2Fe-2S center, to the oxygenase activity site of the enzyme. In Acinetobacter pittii (strain PHEA-2), this protein is Phenol hydroxylase P5 protein (mphP).